We begin with the raw amino-acid sequence, 497 residues long: 3-octaprenyl-4-hydroxybenzoate carboxy-lyase (497 aa).

Asparagine 175 serves as a coordination point for Mn(2+). Prenylated FMN-binding positions include 178–180 (IYR), 192–194 (RWL), and 197–198 (RG). Mn(2+) is bound at residue glutamate 241. The active-site Proton donor is aspartate 290.

This sequence belongs to the UbiD family. Homohexamer. Prenylated FMN serves as cofactor. It depends on Mn(2+) as a cofactor.

It is found in the cell membrane. It carries out the reaction a 4-hydroxy-3-(all-trans-polyprenyl)benzoate + H(+) = a 2-(all-trans-polyprenyl)phenol + CO2. The protein operates within cofactor biosynthesis; ubiquinone biosynthesis. Functionally, catalyzes the decarboxylation of 3-octaprenyl-4-hydroxy benzoate to 2-octaprenylphenol, an intermediate step in ubiquinone biosynthesis. The protein is 3-octaprenyl-4-hydroxybenzoate carboxy-lyase of Shigella sonnei (strain Ss046).